Consider the following 311-residue polypeptide: Mitochondrial FAD carrier protein FLX1 (311 aa).

Solcar repeat units follow at residues 7–101 (TPLQ…TKEL), 123–210 (MNSL…LKQR), and 224–310 (LTNL…LKHR). Transmembrane regions (helical) follow at residues 13 to 33 (VISG…LDLL), 77 to 97 (LSIN…LYGV), 129 to 149 (LSAG…IWVI), 183 to 203 (LWKG…YFAV), 230 to 250 (IEIT…FQLL), and 266 to 286 (LFPL…YKGL).

The protein belongs to the mitochondrial carrier (TC 2.A.29) family.

It is found in the mitochondrion inner membrane. Its function is as follows. Transport of FAD from the cytosol to the mitochondrial matrix. The protein is Mitochondrial FAD carrier protein FLX1 (FLX1) of Saccharomyces cerevisiae (strain ATCC 204508 / S288c) (Baker's yeast).